A 186-amino-acid polypeptide reads, in one-letter code: dCTP deaminase (186 aa).

Position 107–112 (107–112 (KSSYAR)) interacts with dCTP. E133 functions as the Proton donor/acceptor in the catalytic mechanism. Residues Q152, Y166, and Q176 each contribute to the dCTP site.

Belongs to the dCTP deaminase family. In terms of assembly, homotrimer.

The catalysed reaction is dCTP + H2O + H(+) = dUTP + NH4(+). It participates in pyrimidine metabolism; dUMP biosynthesis; dUMP from dCTP (dUTP route): step 1/2. Its function is as follows. Catalyzes the deamination of dCTP to dUTP. The sequence is that of dCTP deaminase from Chloroflexus aurantiacus (strain ATCC 29366 / DSM 635 / J-10-fl).